Consider the following 443-residue polypeptide: Flagellum-specific ATP synthase (443 aa).

169 to 176 (AGAGVGKS) is an ATP binding site.

Belongs to the ATPase alpha/beta chains family.

The protein localises to the cytoplasm. The enzyme catalyses ATP + H2O + 4 H(+)(in) = ADP + phosphate + 5 H(+)(out). Functionally, probable catalytic subunit of a protein translocase for flagellum-specific export, or a proton translocase involved in local circuits at the flagellum. The polypeptide is Flagellum-specific ATP synthase (fliI) (Aquifex aeolicus (strain VF5)).